The sequence spans 536 residues: Heparanase-like protein 3 (536 aa).

Residues 1-24 (MAYRQILAIVLFLCVFQFLDCTVS) form the signal peptide. N-linked (GlcNAc...) asparagine glycans are attached at residues asparagine 30, asparagine 122, asparagine 176, and asparagine 191. The active-site Proton donor is the glutamate 202. Asparagine 265 and asparagine 308 each carry an N-linked (GlcNAc...) asparagine glycan. The Nucleophile role is filled by glutamate 319. N-linked (GlcNAc...) asparagine glycans are attached at residues asparagine 370, asparagine 427, asparagine 438, and asparagine 510.

This sequence belongs to the glycosyl hydrolase 79 family.

The protein localises to the lysosome membrane. It localises to the secreted. Endoglycosidase which is a cell surface and extracellular matrix-degrading enzyme. Cleaves heparan sulfate proteoglycans (HSPGs) into heparan sulfate side chains and core proteoglycans. This Arabidopsis thaliana (Mouse-ear cress) protein is Heparanase-like protein 3.